The primary structure comprises 750 residues: Photosystem I P700 chlorophyll a apoprotein A1 (750 aa).

Helical transmembrane passes span V70–A93, L156–H179, L195–L219, T291–Y309, W346–Y369, L385–V411, A433–H455, and F531–L549. 2 residues coordinate [4Fe-4S] cluster: C573 and C582. 2 consecutive transmembrane segments (helical) span residues H589–W610 and L664–F686. Residue H675 coordinates chlorophyll a'. Chlorophyll a contacts are provided by M683 and Y691. Residue W692 coordinates phylloquinone. Residues A724–A744 form a helical membrane-spanning segment.

It belongs to the PsaA/PsaB family. In terms of assembly, the PsaA/B heterodimer binds the P700 chlorophyll special pair and subsequent electron acceptors. PSI consists of a core antenna complex that captures photons, and an electron transfer chain that converts photonic excitation into a charge separation. The eukaryotic PSI reaction center is composed of at least 11 subunits. The cofactor is P700 is a chlorophyll a/chlorophyll a' dimer, A0 is one or more chlorophyll a, A1 is one or both phylloquinones and FX is a shared 4Fe-4S iron-sulfur center..

It localises to the plastid. The protein resides in the chloroplast thylakoid membrane. The enzyme catalyses reduced [plastocyanin] + hnu + oxidized [2Fe-2S]-[ferredoxin] = oxidized [plastocyanin] + reduced [2Fe-2S]-[ferredoxin]. In terms of biological role, psaA and PsaB bind P700, the primary electron donor of photosystem I (PSI), as well as the electron acceptors A0, A1 and FX. PSI is a plastocyanin-ferredoxin oxidoreductase, converting photonic excitation into a charge separation, which transfers an electron from the donor P700 chlorophyll pair to the spectroscopically characterized acceptors A0, A1, FX, FA and FB in turn. Oxidized P700 is reduced on the lumenal side of the thylakoid membrane by plastocyanin. The polypeptide is Photosystem I P700 chlorophyll a apoprotein A1 (Angiopteris evecta (Mule's foot fern)).